Reading from the N-terminus, the 214-residue chain is Adenylate kinase (214 aa).

Residue 10 to 15 coordinates ATP; the sequence is GSGKGT. The segment at 30–59 is NMP; that stretch reads STGDMLRAAVREGTPLGMEAKKIMDAGQLV. AMP-binding positions include Thr-31, Arg-36, 57–59, 85–88, and Gln-92; these read QLV and GFPR. The tract at residues 122–159 is LID; sequence GRRVHPASGRTYHVVFNPPKVEGRDDETGEPLVQREDD. Residues Arg-123 and 132 to 133 each bind ATP; that span reads TY. AMP-binding residues include Arg-156 and Arg-167. ATP is bound at residue Gly-200.

The protein belongs to the adenylate kinase family. Monomer.

The protein localises to the cytoplasm. It carries out the reaction AMP + ATP = 2 ADP. It functions in the pathway purine metabolism; AMP biosynthesis via salvage pathway; AMP from ADP: step 1/1. Functionally, catalyzes the reversible transfer of the terminal phosphate group between ATP and AMP. Plays an important role in cellular energy homeostasis and in adenine nucleotide metabolism. This is Adenylate kinase from Methylococcus capsulatus (strain ATCC 33009 / NCIMB 11132 / Bath).